We begin with the raw amino-acid sequence, 282 residues long: Bis(5'-nucleosyl)-tetraphosphatase, symmetrical (282 aa).

The protein belongs to the Ap4A hydrolase family.

It catalyses the reaction P(1),P(4)-bis(5'-adenosyl) tetraphosphate + H2O = 2 ADP + 2 H(+). Its function is as follows. Hydrolyzes diadenosine 5',5'''-P1,P4-tetraphosphate to yield ADP. The protein is Bis(5'-nucleosyl)-tetraphosphatase, symmetrical of Escherichia coli O7:K1 (strain IAI39 / ExPEC).